The sequence spans 840 residues: Phosphatidylinositol-3-phosphatase myotubularin-1 (840 aa).

Residues 1 to 28 (MTPPRPPSGRVRSLRDYSSESEKMDGTG) are disordered. Residues 13 to 25 (SLRDYSSESEKMD) are compositionally biased toward basic and acidic residues. Positions 45-112 (GSFSNLSCLL…ATIEKFNKMV (68 aa)) constitute a GRAM domain. A Myotubularin phosphatase domain is found at 199 to 650 (GKSSIRASMD…LAPTLWPQFH (452 aa)). Substrate is bound by residues 332–335 (NGAM), 357–358 (NI), 443–449 (CSDGWDR), and Arg-489. Cys-443 (phosphocysteine intermediate) is an active-site residue. A disordered region spans residues 506-535 (QSSSAGSFPSSPVRQSSGSAASQSSSSSHG). The segment covering 507–535 (SSSAGSFPSSPVRQSSGSAASQSSSSSHG) has biased composition (low complexity). Residues 666–734 (VQCRAMTVKY…AALTRAVQSL (69 aa)) are a coiled coil. The segment at 745-771 (VEDDPRSSLENNPRRRNRHGNNSDVSV) is disordered.

The protein belongs to the protein-tyrosine phosphatase family. Non-receptor class myotubularin subfamily. As to expression, mostly expressed in siliques and leaves (including hydathodes), and, to a lower extent, in flowers and roots.

The protein resides in the cytoplasm. The protein localises to the endosome membrane. It carries out the reaction a 1,2-diacyl-sn-glycero-3-phospho-(1D-myo-inositol-3-phosphate) + H2O = a 1,2-diacyl-sn-glycero-3-phospho-(1D-myo-inositol) + phosphate. The catalysed reaction is a 1,2-diacyl-sn-glycero-3-phospho-(1D-myo-inositol-3,5-bisphosphate) + H2O = a 1,2-diacyl-sn-glycero-3-phospho-(1D-myo-inositol-5-phosphate) + phosphate. Its function is as follows. Phosphatase with phosphoinositide 3'-phosphatase activity that can use phosphatidylinositol-3-phosphate (PtdIns3P) and phosphatidylinositol-3,5-diphosphate (PtdIns3,5P(2)) as substrates and produces phosphatidylinositol-5-phosphate (PtdIns5P); participates in pathway(s) that transfer gene regulatory signals to the nucleus. Required for recovery after water deprivation, via the accumulation of PtdIns5P upon dehydration; high PtdIns5P levels mediate ATX1 cytoplasmic localization, thus down-regulating the expression of ATX1-dependent genes. Confers sensitivity to soil-water-deficit stress. The polypeptide is Phosphatidylinositol-3-phosphatase myotubularin-1 (MTM1) (Arabidopsis thaliana (Mouse-ear cress)).